The following is a 110-amino-acid chain: MEVRAVSKFLRVSPHKARLVADLVRGKKVSDALTILKFTPKKSGRFINKTLRSAVANAENTKSMDVETLFVKSIFVDKGPQLKRWRPRAMGRATKILKGSSHITIILAEK.

Belongs to the universal ribosomal protein uL22 family. As to quaternary structure, part of the 50S ribosomal subunit.

In terms of biological role, this protein binds specifically to 23S rRNA; its binding is stimulated by other ribosomal proteins, e.g. L4, L17, and L20. It is important during the early stages of 50S assembly. It makes multiple contacts with different domains of the 23S rRNA in the assembled 50S subunit and ribosome. The globular domain of the protein is located near the polypeptide exit tunnel on the outside of the subunit, while an extended beta-hairpin is found that lines the wall of the exit tunnel in the center of the 70S ribosome. This Syntrophobacter fumaroxidans (strain DSM 10017 / MPOB) protein is Large ribosomal subunit protein uL22.